Consider the following 95-residue polypeptide: MAWARDEGGAAVLELLVQPRASRTRAVGEHDGRLKIQLAAPPVDGAANAALVEFLAVALGVRRADVALLRGETGRRKTVRVAGITAAAAVAALAS.

This sequence belongs to the UPF0235 family.

The protein is UPF0235 protein AnaeK_1146 of Anaeromyxobacter sp. (strain K).